We begin with the raw amino-acid sequence, 477 residues long: Glycogen synthase (477 aa).

ADP-alpha-D-glucose is bound at residue Lys-15.

The protein belongs to the glycosyltransferase 1 family. Bacterial/plant glycogen synthase subfamily.

It catalyses the reaction [(1-&gt;4)-alpha-D-glucosyl](n) + ADP-alpha-D-glucose = [(1-&gt;4)-alpha-D-glucosyl](n+1) + ADP + H(+). It participates in glycan biosynthesis; glycogen biosynthesis. In terms of biological role, synthesizes alpha-1,4-glucan chains using ADP-glucose. In Streptococcus pneumoniae (strain ATCC 700669 / Spain 23F-1), this protein is Glycogen synthase.